The chain runs to 156 residues: Endoribonuclease YbeY (156 aa).

Zn(2+) is bound by residues histidine 114, histidine 118, and histidine 124.

Belongs to the endoribonuclease YbeY family. Zn(2+) is required as a cofactor.

Its subcellular location is the cytoplasm. Single strand-specific metallo-endoribonuclease involved in late-stage 70S ribosome quality control and in maturation of the 3' terminus of the 16S rRNA. This chain is Endoribonuclease YbeY, found in Sodalis glossinidius (strain morsitans).